A 346-amino-acid chain; its full sequence is STE20-related kinase adapter protein stlk (346 aa).

The Protein kinase domain occupies 10-298 (YKLLEILKNG…ASKLMTHSFL (289 aa)). ATP-binding positions include 16–24 (LKNGMIGTV) and lysine 38.

This sequence belongs to the protein kinase superfamily. STE Ser/Thr protein kinase family. STE20 subfamily.

The chain is STE20-related kinase adapter protein stlk from Drosophila melanogaster (Fruit fly).